Reading from the N-terminus, the 334-residue chain is Anthranilate phosphoribosyltransferase (334 aa).

5-phospho-alpha-D-ribose 1-diphosphate is bound by residues Gly-81, 84-85 (GD), Thr-89, 91-94 (NIST), 109-117 (KHGNRSVSS), and Ala-121. Position 81 (Gly-81) interacts with anthranilate. Ser-93 serves as a coordination point for Mg(2+). An anthranilate-binding site is contributed by Asn-112. Arg-167 is an anthranilate binding site. Positions 225 and 226 each coordinate Mg(2+).

Belongs to the anthranilate phosphoribosyltransferase family. As to quaternary structure, homodimer. Requires Mg(2+) as cofactor.

The catalysed reaction is N-(5-phospho-beta-D-ribosyl)anthranilate + diphosphate = 5-phospho-alpha-D-ribose 1-diphosphate + anthranilate. The protein operates within amino-acid biosynthesis; L-tryptophan biosynthesis; L-tryptophan from chorismate: step 2/5. In terms of biological role, catalyzes the transfer of the phosphoribosyl group of 5-phosphorylribose-1-pyrophosphate (PRPP) to anthranilate to yield N-(5'-phosphoribosyl)-anthranilate (PRA). The sequence is that of Anthranilate phosphoribosyltransferase from Histophilus somni (strain 2336) (Haemophilus somnus).